The chain runs to 644 residues: Exoribonuclease 2 (644 aa).

Positions 189–516 constitute an RNB domain; it reads REDLTALNFV…NHRLLKAIIA (328 aa). The 83-residue stretch at 561-643 folds into the S1 motif domain; the sequence is DERFNAEIID…ETRSVIARPA (83 aa).

It belongs to the RNR ribonuclease family. RNase II subfamily.

The protein localises to the cytoplasm. The enzyme catalyses Exonucleolytic cleavage in the 3'- to 5'-direction to yield nucleoside 5'-phosphates.. Functionally, involved in mRNA degradation. Hydrolyzes single-stranded polyribonucleotides processively in the 3' to 5' direction. The protein is Exoribonuclease 2 of Serratia proteamaculans (strain 568).